A 297-amino-acid polypeptide reads, in one-letter code: Glycerol-3-phosphate dehydrogenase [NAD(P)+] (297 aa).

NADPH-binding residues include Trp11, Arg30, and Lys79. Positions 79, 107, and 109 each coordinate sn-glycerol 3-phosphate. Ala111 contributes to the NADPH binding site. The sn-glycerol 3-phosphate site is built by Lys161, Asp214, Ser224, Arg225, and Asn226. Lys161 serves as the catalytic Proton acceptor. Arg225 lines the NADPH pocket. Residues Val249 and Glu251 each contribute to the NADPH site.

This sequence belongs to the NAD-dependent glycerol-3-phosphate dehydrogenase family.

The protein localises to the cytoplasm. The enzyme catalyses sn-glycerol 3-phosphate + NAD(+) = dihydroxyacetone phosphate + NADH + H(+). It catalyses the reaction sn-glycerol 3-phosphate + NADP(+) = dihydroxyacetone phosphate + NADPH + H(+). Its pathway is membrane lipid metabolism; glycerophospholipid metabolism. Its function is as follows. Catalyzes the reduction of the glycolytic intermediate dihydroxyacetone phosphate (DHAP) to sn-glycerol 3-phosphate (G3P), the key precursor for phospholipid synthesis. This is Glycerol-3-phosphate dehydrogenase [NAD(P)+] from Wolinella succinogenes (strain ATCC 29543 / DSM 1740 / CCUG 13145 / JCM 31913 / LMG 7466 / NCTC 11488 / FDC 602W) (Vibrio succinogenes).